Consider the following 164-residue polypeptide: Ribosome-binding factor A (164 aa).

Belongs to the RbfA family. Monomer. Binds 30S ribosomal subunits, but not 50S ribosomal subunits or 70S ribosomes.

The protein localises to the cytoplasm. Its function is as follows. One of several proteins that assist in the late maturation steps of the functional core of the 30S ribosomal subunit. Associates with free 30S ribosomal subunits (but not with 30S subunits that are part of 70S ribosomes or polysomes). Required for efficient processing of 16S rRNA. May interact with the 5'-terminal helix region of 16S rRNA. This Caulobacter sp. (strain K31) protein is Ribosome-binding factor A.